A 1457-amino-acid polypeptide reads, in one-letter code: NBPF family member NBPF12 (1457 aa).

A coiled-coil region spans residues arginine 75 to alanine 119. Residues leucine 162 to proline 200 form a disordered region. Residues glutamate 165 to lysine 181 are compositionally biased toward acidic residues. The 95-residue stretch at glutamate 165 to proline 259 folds into the Olduvai 1 domain. Basic and acidic residues predominate over residues glutamate 190 to proline 200. Positions lysine 339 to alanine 390 form a coiled coil. The interval lysine 432–glutamate 472 is disordered. The segment covering glutamate 436 to lysine 452 has biased composition (acidic residues). Residues glutamate 436–proline 530 form the Olduvai 2 domain. Over residues glutamate 461–glutamate 472 the composition is skewed to basic and acidic residues. Residues lysine 610–alanine 661 are a coiled coil. Olduvai domains lie at glutamate 707–proline 799, glutamate 800–glycine 871, arginine 872–proline 963, serine 966–aspartate 1021, arginine 1022–lysine 1114, lysine 1115–proline 1207, serine 1210–aspartate 1265, arginine 1266–lysine 1358, and lysine 1359–glutamine 1457. 2 disordered regions span residues alanine 721–leucine 746 and tryptophan 791–threonine 838. 2 stretches are compositionally biased toward acidic residues: residues asparagine 801 to glutamate 810 and glutamate 821 to aspartate 833. A disordered region spans residues lysine 1100–leucine 1139. Basic residues predominate over residues glycine 1102 to arginine 1120. Residues lysine 1344 to leucine 1378 are disordered. Positions glycine 1346–arginine 1364 are enriched in basic residues.

It belongs to the NBPF family. In terms of tissue distribution, widely expressed with highest levels in brain, ovary, mammary gland, skin and adipose tissue. Also expressed in testis. Detected in a number of tumors including osteosarcoma, mammary carcinoma and hepatocellular carcinoma.

It localises to the cytoplasm. In Homo sapiens (Human), this protein is NBPF family member NBPF12.